A 256-amino-acid polypeptide reads, in one-letter code: MTSSERVAKVVLVDIEGTTTSISFVHEVLFPYAKQNVEKFLRDSWKVDDIQRIVQDMQQLPQFEEYKVLLRAPPAEVDVELIAGFVRYLIDQDLKVTPMKTLQGLIWEQGYTNGELKGHVYEDVPAAFEAWRAAGLQIAVYSSGSVAAQKLIFGHSLVGNLQPHLSAYFDTHVGHKQDQKSYENIANLLKEDPKQILFLTDIPGEAAAARSAGLQAVILQRPGNAALADDQKASFELMPDFKSLQNLKLPINKYQA.

Mg(2+)-binding residues include aspartate 14 and glutamate 16. Residues 142–143 (SS) and lysine 176 contribute to the substrate site. Aspartate 201 is a Mg(2+) binding site.

Belongs to the HAD-like hydrolase superfamily. MasA/MtnC family. As to quaternary structure, monomer. Mg(2+) is required as a cofactor.

Its subcellular location is the cytoplasm. The protein localises to the nucleus. The enzyme catalyses 5-methylsulfanyl-2,3-dioxopentyl phosphate + H2O = 1,2-dihydroxy-5-(methylsulfanyl)pent-1-en-3-one + phosphate. The protein operates within amino-acid biosynthesis; L-methionine biosynthesis via salvage pathway; L-methionine from S-methyl-5-thio-alpha-D-ribose 1-phosphate: step 3/6. Its pathway is amino-acid biosynthesis; L-methionine biosynthesis via salvage pathway; L-methionine from S-methyl-5-thio-alpha-D-ribose 1-phosphate: step 4/6. Its function is as follows. Bifunctional enzyme that catalyzes the enolization of 2,3-diketo-5-methylthiopentyl-1-phosphate (DK-MTP-1-P) into the intermediate 2-hydroxy-3-keto-5-methylthiopentenyl-1-phosphate (HK-MTPenyl-1-P), which is then dephosphorylated to form the acireductone 1,2-dihydroxy-3-keto-5-methylthiopentene (DHK-MTPene). The polypeptide is Enolase-phosphatase E1 (Drosophila yakuba (Fruit fly)).